The sequence spans 361 residues: Homer protein homolog 3 (361 aa).

Residues 1-80 (MSTAREQPIF…TKTSQKFGQW (80 aa)) form a required for interaction with NFATC2 region. Positions 1-113 (MSTAREQPIF…EKFQEVKEAA (113 aa)) constitute a WH1 domain. Residues 114–169 (RLAREKSQDGGELTSPALGLASHQVPPSPLVSANGPGEEKLFRSQSADAPGPTERE) are disordered. Phosphoserine occurs at positions 120 and 159. 2 coiled-coil regions span residues 191-243 (ALQD…SEVT) and 254-358 (GQSL…RLAE).

This sequence belongs to the Homer family. Tetramer. Isoform 1 and isoform 2 encode coiled-coil structures that mediate homo- and heteromultimerization. Interacts with NFATC2; interaction is calcium independent; interaction competes with PPP3CA for NFATC2 binding; interaction is reduced by AKT activation. Interacts with NFATC1 and NFATC4. Interacts with SHANK1; forms a high-order complex at least composed of SHANK1 and HOMER3; the complex formation is regulated by CAMK2A-mediated phosphorylation.

It is found in the cytoplasm. It localises to the postsynaptic density. Its subcellular location is the synapse. In terms of biological role, postsynaptic density scaffolding protein. Binds and cross-links cytoplasmic regions of GRM1, GRM5, ITPR1, DNM3, RYR1, RYR2, SHANK1 and SHANK3. By physically linking GRM1 and GRM5 with ER-associated ITPR1 receptors, it aids the coupling of surface receptors to intracellular calcium release. Isoforms can be differently regulated and may play an important role in maintaining the plasticity at glutamatergic synapses. Negatively regulates T cell activation by inhibiting the calcineurin-NFAT pathway. Acts by competing with calcineurin/PPP3CA for NFAT protein binding, hence preventing NFAT activation by PPP3CA. The polypeptide is Homer protein homolog 3 (Homo sapiens (Human)).